A 366-amino-acid polypeptide reads, in one-letter code: E3 ubiquitin-protein ligase SINA-like 1 (366 aa).

The disordered stretch occupies residues Met-1–Gly-37. The RING-type; degenerate zinc finger occupies Cys-56–Ser-92. An SBD region spans residues Val-106–Leu-354. The SIAH-type; degenerate zinc finger occupies Ala-109 to Lys-232. Zn(2+) contacts are provided by Cys-114, Cys-186, His-198, Cys-202, Cys-209, Cys-214, His-226, and His-231.

This sequence belongs to the SINA (Seven in absentia) family.

It catalyses the reaction S-ubiquitinyl-[E2 ubiquitin-conjugating enzyme]-L-cysteine + [acceptor protein]-L-lysine = [E2 ubiquitin-conjugating enzyme]-L-cysteine + N(6)-ubiquitinyl-[acceptor protein]-L-lysine.. Its pathway is protein modification; protein ubiquitination. E3 ubiquitin-protein ligase that mediates ubiquitination and subsequent proteasomal degradation of target proteins. E3 ubiquitin ligases accept ubiquitin from an E2 ubiquitin-conjugating enzyme in the form of a thioester and then directly transfers the ubiquitin to targeted substrates. It probably triggers the ubiquitin-mediated degradation of different substrates. This is E3 ubiquitin-protein ligase SINA-like 1 from Arabidopsis thaliana (Mouse-ear cress).